The primary structure comprises 147 residues: Hemoglobin subunit gamma (147 aa).

The Globin domain maps to 3–147 (NFTAEDKAAI…VASALASRYH (145 aa)). Heme b is bound by residues His-64 and His-93.

It belongs to the globin family. In terms of assembly, heterotetramer of two alpha chains and two gamma chains in fetal hemoglobin (Hb F). As to expression, red blood cells.

Gamma chains make up the fetal hemoglobin F, in combination with alpha chains. The sequence is that of Hemoglobin subunit gamma (HBG) from Alouatta belzebul (Red-handed howler monkey).